The sequence spans 330 residues: Carbonic anhydrase (330 aa).

The chloroplast transit peptide-like stretch occupies residues 1-109 (MSTASAFATN…AAARIDQITA (109 aa)).

It belongs to the beta-class carbonic anhydrase family.

The protein localises to the cytoplasm. It carries out the reaction hydrogencarbonate + H(+) = CO2 + H2O. In terms of biological role, reversible hydration of carbon dioxide. The protein is Carbonic anhydrase of Flaveria brownii (Brown's yellowtops).